A 427-amino-acid chain; its full sequence is Serine--tRNA ligase (427 aa).

231 to 233 (TAE) is a binding site for L-serine. 262-264 (RSE) is a binding site for ATP. An L-serine-binding site is contributed by Glu-285. 349–352 (EISS) contacts ATP. Ser-385 is an L-serine binding site.

It belongs to the class-II aminoacyl-tRNA synthetase family. Type-1 seryl-tRNA synthetase subfamily. As to quaternary structure, homodimer. The tRNA molecule binds across the dimer.

It localises to the cytoplasm. The catalysed reaction is tRNA(Ser) + L-serine + ATP = L-seryl-tRNA(Ser) + AMP + diphosphate + H(+). It catalyses the reaction tRNA(Sec) + L-serine + ATP = L-seryl-tRNA(Sec) + AMP + diphosphate + H(+). The protein operates within aminoacyl-tRNA biosynthesis; selenocysteinyl-tRNA(Sec) biosynthesis; L-seryl-tRNA(Sec) from L-serine and tRNA(Sec): step 1/1. Its function is as follows. Catalyzes the attachment of serine to tRNA(Ser). Is also able to aminoacylate tRNA(Sec) with serine, to form the misacylated tRNA L-seryl-tRNA(Sec), which will be further converted into selenocysteinyl-tRNA(Sec). In Rhizobium etli (strain ATCC 51251 / DSM 11541 / JCM 21823 / NBRC 15573 / CFN 42), this protein is Serine--tRNA ligase.